The following is a 277-amino-acid chain: Probable endonuclease 4 (277 aa).

Zn(2+)-binding residues include H67, H107, E142, D176, H179, H211, D224, H226, and E256.

It belongs to the AP endonuclease 2 family. Zn(2+) is required as a cofactor.

It catalyses the reaction Endonucleolytic cleavage to 5'-phosphooligonucleotide end-products.. Its function is as follows. Endonuclease IV plays a role in DNA repair. It cleaves phosphodiester bonds at apurinic or apyrimidinic (AP) sites, generating a 3'-hydroxyl group and a 5'-terminal sugar phosphate. In Akkermansia muciniphila (strain ATCC BAA-835 / DSM 22959 / JCM 33894 / BCRC 81048 / CCUG 64013 / CIP 107961 / Muc), this protein is Probable endonuclease 4.